Consider the following 458-residue polypeptide: SH2 domain-containing protein 7 (458 aa).

Residues 51–142 (WFHGFITRKQ…PFGETLAAAC (92 aa)) form the SH2 domain. 2 disordered regions span residues 204–235 (RSVS…SPAG) and 267–326 (AGSL…TLGS). The span at 278–288 (PSGKLSDEDQN) shows a compositional bias: basic and acidic residues. Residues 304 to 326 (QGSTMPYTSLGFSLPPSSETLGS) show a composition bias toward polar residues.

The chain is SH2 domain-containing protein 7 (Sh2d7) from Mus musculus (Mouse).